Here is a 228-residue protein sequence, read N- to C-terminus: 2,3-bisphosphoglycerate-dependent phosphoglycerate mutase (228 aa).

Residues 7-14 (RHGESAWN), 20-21 (TG), R59, 86-89 (ERHY), K97, 113-114 (RR), and 182-183 (GN) contribute to the substrate site. Residue H8 is the Tele-phosphohistidine intermediate of the active site. The active-site Proton donor/acceptor is E86.

Belongs to the phosphoglycerate mutase family. BPG-dependent PGAM subfamily.

The catalysed reaction is (2R)-2-phosphoglycerate = (2R)-3-phosphoglycerate. Its pathway is carbohydrate degradation; glycolysis; pyruvate from D-glyceraldehyde 3-phosphate: step 3/5. Its function is as follows. Catalyzes the interconversion of 2-phosphoglycerate and 3-phosphoglycerate. The protein is 2,3-bisphosphoglycerate-dependent phosphoglycerate mutase of Fusobacterium nucleatum subsp. nucleatum (strain ATCC 25586 / DSM 15643 / BCRC 10681 / CIP 101130 / JCM 8532 / KCTC 2640 / LMG 13131 / VPI 4355).